A 227-amino-acid polypeptide reads, in one-letter code: Cytochrome c oxidase subunit 2 (227 aa).

The Mitochondrial intermembrane portion of the chain corresponds to 1-14 (MPYPLQLGFQDATS). Residues 15–45 (PIMEELLHFHDHTLMIVFLISSLVLYIITLM) form a helical membrane-spanning segment. Topologically, residues 46–59 (LTTKLTHTSTMDAQ) are mitochondrial matrix. A helical membrane pass occupies residues 60–87 (EVETVWTILPAVILILIALPSLRILYMM). At 88 to 227 (DEINNPLLTI…HFEDWSTSML (140 aa)) the chain is on the mitochondrial intermembrane side. Positions 161, 196, 198, 200, 204, and 207 each coordinate Cu cation. Glu198 contacts Mg(2+).

This sequence belongs to the cytochrome c oxidase subunit 2 family. Component of the cytochrome c oxidase (complex IV, CIV), a multisubunit enzyme composed of 14 subunits. The complex is composed of a catalytic core of 3 subunits MT-CO1, MT-CO2 and MT-CO3, encoded in the mitochondrial DNA, and 11 supernumerary subunits COX4I, COX5A, COX5B, COX6A, COX6B, COX6C, COX7A, COX7B, COX7C, COX8 and NDUFA4, which are encoded in the nuclear genome. The complex exists as a monomer or a dimer and forms supercomplexes (SCs) in the inner mitochondrial membrane with NADH-ubiquinone oxidoreductase (complex I, CI) and ubiquinol-cytochrome c oxidoreductase (cytochrome b-c1 complex, complex III, CIII), resulting in different assemblies (supercomplex SCI(1)III(2)IV(1) and megacomplex MCI(2)III(2)IV(2)). Found in a complex with TMEM177, COA6, COX18, COX20, SCO1 and SCO2. Interacts with TMEM177 in a COX20-dependent manner. Interacts with COX20. Interacts with COX16. Cu cation serves as cofactor.

Its subcellular location is the mitochondrion inner membrane. It catalyses the reaction 4 Fe(II)-[cytochrome c] + O2 + 8 H(+)(in) = 4 Fe(III)-[cytochrome c] + 2 H2O + 4 H(+)(out). In terms of biological role, component of the cytochrome c oxidase, the last enzyme in the mitochondrial electron transport chain which drives oxidative phosphorylation. The respiratory chain contains 3 multisubunit complexes succinate dehydrogenase (complex II, CII), ubiquinol-cytochrome c oxidoreductase (cytochrome b-c1 complex, complex III, CIII) and cytochrome c oxidase (complex IV, CIV), that cooperate to transfer electrons derived from NADH and succinate to molecular oxygen, creating an electrochemical gradient over the inner membrane that drives transmembrane transport and the ATP synthase. Cytochrome c oxidase is the component of the respiratory chain that catalyzes the reduction of oxygen to water. Electrons originating from reduced cytochrome c in the intermembrane space (IMS) are transferred via the dinuclear copper A center (CU(A)) of subunit 2 and heme A of subunit 1 to the active site in subunit 1, a binuclear center (BNC) formed by heme A3 and copper B (CU(B)). The BNC reduces molecular oxygen to 2 water molecules using 4 electrons from cytochrome c in the IMS and 4 protons from the mitochondrial matrix. The polypeptide is Cytochrome c oxidase subunit 2 (MT-CO2) (Dasypus novemcinctus (Nine-banded armadillo)).